We begin with the raw amino-acid sequence, 681 residues long: Probable L-type lectin-domain containing receptor kinase VII.2 (681 aa).

A signal peptide spans 1–23 (MFSKVSILLFSLASLLLFRSTTG). A legume-lectin like region spans residues 24–260 (IEFIYNSNFT…SHRILSWSFS (237 aa)). The Extracellular segment spans residues 24–290 (IEFIYNSNFT…SGDSVLKSKG (267 aa)). Residues asparagine 31, asparagine 42, asparagine 56, asparagine 72, asparagine 126, asparagine 202, asparagine 207, asparagine 228, and asparagine 263 are each glycosylated (N-linked (GlcNAc...) asparagine). Residues 291-311 (FIAGVSSGVVLLVSVIGLLCF) traverse the membrane as a helical segment. The Cytoplasmic segment spans residues 312 to 681 (YVVRRRRQRL…QTYDSILHGR (370 aa)). The Protein kinase domain maps to 349 to 624 (FSDENMIGYG…VVQILEQGRL (276 aa)). ATP is bound by residues 355–363 (IGYGGNSKV) and lysine 376. Residue aspartate 475 is the Proton acceptor of the active site.

This sequence in the C-terminal section; belongs to the protein kinase superfamily. Ser/Thr protein kinase family. The protein in the N-terminal section; belongs to the leguminous lectin family.

The protein localises to the cell membrane. The enzyme catalyses L-seryl-[protein] + ATP = O-phospho-L-seryl-[protein] + ADP + H(+). The catalysed reaction is L-threonyl-[protein] + ATP = O-phospho-L-threonyl-[protein] + ADP + H(+). The polypeptide is Probable L-type lectin-domain containing receptor kinase VII.2 (LECRK72) (Arabidopsis thaliana (Mouse-ear cress)).